Reading from the N-terminus, the 556-residue chain is Energy-dependent translational throttle protein EttA (556 aa).

2 ABC transporter domains span residues 7–260 (YTMH…EQEQ) and 325–551 (IEVQ…RIKY). 40 to 47 (GLNGAGKS) provides a ligand contact to ATP. The interval 96-140 (SEVKNALTRLDEVYALYADPDADFDKLAAEQANLEAIIQAHDGHN) is arm. The segment at 243–323 (GNYSSWLEQK…IPPGPRLGDK (81 aa)) is ptIM. 357 to 364 (GANGAGKS) is an ATP binding site.

This sequence belongs to the ABC transporter superfamily. ABCF family. Translational throttle EttA subfamily. As to quaternary structure, monomer. Probably contacts ribosomal proteins L1, L5, L33 and S7, the 16S and 23S rRNA and the P-site containing tRNA(fMet).

The protein localises to the cytoplasm. It carries out the reaction ATP + H2O = ADP + phosphate + H(+). Its function is as follows. A translation factor that gates the progression of the 70S ribosomal initiation complex (IC, containing tRNA(fMet) in the P-site) into the translation elongation cycle by using a mechanism sensitive to the ATP/ADP ratio. Binds to the 70S ribosome E-site where it modulates the state of the translating ribosome during subunit translocation. ATP hydrolysis probably frees it from the ribosome, which can enter the elongation phase. In Haemophilus influenzae (strain ATCC 51907 / DSM 11121 / KW20 / Rd), this protein is Energy-dependent translational throttle protein EttA.